The chain runs to 83 residues: Small ribosomal subunit protein eS21 (83 aa).

It belongs to the eukaryotic ribosomal protein eS21 family. In terms of assembly, component of the 40S small ribosomal subunit.

It is found in the cytoplasm. The protein localises to the cytosol. Its subcellular location is the rough endoplasmic reticulum. Component of the small ribosomal subunit. The ribosome is a large ribonucleoprotein complex responsible for the synthesis of proteins in the cell. This is Small ribosomal subunit protein eS21 (rps21) from Ictalurus punctatus (Channel catfish).